Here is a 225-residue protein sequence, read N- to C-terminus: NAD(P)H-quinone oxidoreductase subunit K, chloroplastic (225 aa).

[4Fe-4S] cluster-binding residues include Cys-43, Cys-44, Cys-108, and Cys-139.

Belongs to the complex I 20 kDa subunit family. NDH is composed of at least 16 different subunits, 5 of which are encoded in the nucleus. [4Fe-4S] cluster serves as cofactor.

It is found in the plastid. The protein localises to the chloroplast thylakoid membrane. The enzyme catalyses a plastoquinone + NADH + (n+1) H(+)(in) = a plastoquinol + NAD(+) + n H(+)(out). The catalysed reaction is a plastoquinone + NADPH + (n+1) H(+)(in) = a plastoquinol + NADP(+) + n H(+)(out). In terms of biological role, NDH shuttles electrons from NAD(P)H:plastoquinone, via FMN and iron-sulfur (Fe-S) centers, to quinones in the photosynthetic chain and possibly in a chloroplast respiratory chain. The immediate electron acceptor for the enzyme in this species is believed to be plastoquinone. Couples the redox reaction to proton translocation, and thus conserves the redox energy in a proton gradient. This is NAD(P)H-quinone oxidoreductase subunit K, chloroplastic from Capsella bursa-pastoris (Shepherd's purse).